A 51-amino-acid chain; its full sequence is uncharacterized protein (51 aa).

The segment at 1-42 (MKMKTNKYMNMVRPAPPRRADPEGVRDPSTMGGGPNPFLRRS) is disordered.

Its subcellular location is the mitochondrion. This is an uncharacterized protein from Saccharomyces cerevisiae (strain ATCC 204508 / S288c) (Baker's yeast).